We begin with the raw amino-acid sequence, 327 residues long: Gamma-resorcylate decarboxylase (327 aa).

Zn(2+) contacts are provided by Glu8, His10, His164, and Asp287. Asp287 is an active-site residue.

Belongs to the metallo-dependent hydrolases superfamily. ACMSD family. As to quaternary structure, homotetramer. Requires Zn(2+) as cofactor.

The enzyme catalyses 2,6-dihydroxybenzoate + H(+) = resorcinol + CO2. It carries out the reaction 2,3-dihydroxybenzoate + H(+) = catechol + CO2. It participates in aromatic compound metabolism. Insensitive to oxygen. Decarboxylation and carboxylation are inhibited by AgNO(3) and by diethyl pyrocarbonate, a histidine residue-specific inhibitor. Decarboxylation is also inhibited by HgCl(2) and activated by MgCl(2). Functionally, involved in the gamma-resorcylate (2,6-dihydroxybenzoate) catabolism. Catalyzes the reversible decarboxylation of gamma-resorcylate to resorcinol. Also catalyzes the decarboxylation of 2,3-dihydroxybenzoate to catechol, but does not act on 2-hydroxybenzoic acid 3-hydroxybenzoic acid, 4-hydroxybenzoic acid, 3,4-dihydroxybenzoic acid, 2,5-dihydroxybenzoic acid, 2,3,4-trihydroxybenzoic acid, 3,4,5-trihydroxybenzoic acid, 4-aminobenzoic acid, o-hydroxyphenylacetic acid and vanillic acid. Resorcinol and catechol can both be carboxylated by the reverse reaction. In Rhizobium radiobacter (Agrobacterium tumefaciens), this protein is Gamma-resorcylate decarboxylase.